We begin with the raw amino-acid sequence, 153 residues long: NADPH-dependent 7-cyano-7-deazaguanine reductase (153 aa).

The tract at residues Met1 to Pro22 is disordered. Cys51 serves as the catalytic Thioimide intermediate. The active-site Proton donor is Asp58. Residues Val73–Ser75 and His92–Glu93 each bind substrate.

Belongs to the GTP cyclohydrolase I family. QueF type 1 subfamily.

The protein localises to the cytoplasm. The enzyme catalyses 7-aminomethyl-7-carbaguanine + 2 NADP(+) = 7-cyano-7-deazaguanine + 2 NADPH + 3 H(+). The protein operates within tRNA modification; tRNA-queuosine biosynthesis. In terms of biological role, catalyzes the NADPH-dependent reduction of 7-cyano-7-deazaguanine (preQ0) to 7-aminomethyl-7-deazaguanine (preQ1). The protein is NADPH-dependent 7-cyano-7-deazaguanine reductase of Maricaulis maris (strain MCS10) (Caulobacter maris).